A 357-amino-acid polypeptide reads, in one-letter code: Arginine kinase (357 aa).

Ala-2 carries the N-acetylalanine modification. In terms of domain architecture, Phosphagen kinase N-terminal spans 9-91 (KLEEGFKKLQ…FDPIIEDYHK (83 aa)). Residue 64–68 (GVGVY) participates in L-arginine binding. Residues 119-356 (FVISTRVRCG…LELIKIEKEM (238 aa)) enclose the Phosphagen kinase C-terminal domain. ATP is bound by residues 122–126 (STRVR) and His-185. An L-arginine-binding site is contributed by Glu-225. An ATP-binding site is contributed by Arg-229. Cys-271 lines the L-arginine pocket. Residues 280–284 (RASVH) and 309–314 (RGTRGE) each bind ATP. Glu-314 contributes to the L-arginine binding site.

The protein belongs to the ATP:guanido phosphotransferase family.

It carries out the reaction L-arginine + ATP = N(omega)-phospho-L-arginine + ADP + H(+). In Pachygrapsus marmoratus (Marbled rock crab), this protein is Arginine kinase.